The primary structure comprises 202 residues: Snake venom metalloproteinase atroxlysin-1 (202 aa).

One can recognise a Peptidase M12B domain in the interval 6–202 (RYVDLFIVVD…ENPQCILNKR (197 aa)). The Ca(2+) site is built by Asp-9 and Asp-93. Disulfide bonds link Cys-117–Cys-197, Cys-157–Cys-181, and Cys-159–Cys-164. Position 142 (His-142) interacts with Zn(2+). Glu-143 is an active-site residue. Zn(2+) is bound by residues His-146 and His-152. Ca(2+)-binding residues include Cys-197 and Asn-200.

It belongs to the venom metalloproteinase (M12B) family. P-I subfamily. As to quaternary structure, monomer. It depends on Zn(2+) as a cofactor. As to expression, expressed by the venom gland.

Its subcellular location is the secreted. With respect to regulation, inhibited by EDTA, DTT and high concentrations of zinc ions (&gt;2 mM). Weakly inhibited by TLCK. Not inhibited by PMSF. Activated by calcium ions. Its function is as follows. Snake venom zinc metalloproteinase that acts on fibrinogen, fibrin, fibronectin (FN1), type I collagen, type IV collagen, integrin alpha-7/beta-1 (ITGA7/ITGB1) and integrin alpha-1/beta-1 (ITGA1/ITGB1). Binds to fibronectin (FN1), fibrinogen and, weakly, to type I collagen and laminin. Cleaves Xaa-Leu bonds. Inhibits ADP- and collagen-induced platelet aggregation both in the presence (IC(50)=1.4 uM for collagen) and in the absence (IC(50)=2.2 uM for collagen) of cofactors. Has hemorrhagic activity. This is Snake venom metalloproteinase atroxlysin-1 from Bothrops atrox (Barba amarilla).